Consider the following 65-residue polypeptide: Carboxypeptidase A inhibitor (65 aa).

Belongs to the protease inhibitor I44 family.

Its subcellular location is the secreted. Its function is as follows. Inhibits carboxypeptidase A. This Ascaris suum (Pig roundworm) protein is Carboxypeptidase A inhibitor.